Consider the following 224-residue polypeptide: Urease accessory protein UreF (224 aa).

The protein belongs to the UreF family. As to quaternary structure, ureD, UreF and UreG form a complex that acts as a GTP-hydrolysis-dependent molecular chaperone, activating the urease apoprotein by helping to assemble the nickel containing metallocenter of UreC. The UreE protein probably delivers the nickel.

It localises to the cytoplasm. Required for maturation of urease via the functional incorporation of the urease nickel metallocenter. The sequence is that of Urease accessory protein UreF from Klebsiella pneumoniae (strain 342).